A 184-amino-acid chain; its full sequence is Shikimate kinase (184 aa).

Residue G20–R25 participates in ATP binding. Residue S24 participates in Mg(2+) binding. Substrate-binding residues include D42, R66, and G88. Residue R127 coordinates ATP. Residue R146 coordinates substrate. R162 serves as a coordination point for ATP.

This sequence belongs to the shikimate kinase family. In terms of assembly, monomer. Requires Mg(2+) as cofactor.

Its subcellular location is the cytoplasm. The catalysed reaction is shikimate + ATP = 3-phosphoshikimate + ADP + H(+). The protein operates within metabolic intermediate biosynthesis; chorismate biosynthesis; chorismate from D-erythrose 4-phosphate and phosphoenolpyruvate: step 5/7. In terms of biological role, catalyzes the specific phosphorylation of the 3-hydroxyl group of shikimic acid using ATP as a cosubstrate. This is Shikimate kinase from Thermus thermophilus (strain ATCC 27634 / DSM 579 / HB8).